Consider the following 362-residue polypeptide: Serine/threonine-protein kinase SRK2D (362 aa).

A Protein kinase domain is found at 23 to 279 (YDFVKDIGSG…IPEITSDKWF (257 aa)). ATP contacts are provided by residues 29–37 (IGSGNFGVA) and Lys-52. Asp-142 serves as the catalytic Proton acceptor.

This sequence belongs to the protein kinase superfamily. Ser/Thr protein kinase family. In terms of assembly, interacts with ABI1. Interacts with I-2, TOPP1 and TOPP2. Interacts with FREE1 (via C-terminus). Expressed in seeds, seedlings, roots (especially in tips), stems, leaves, shoots, flowers and siliques.

It carries out the reaction L-seryl-[protein] + ATP = O-phospho-L-seryl-[protein] + ADP + H(+). The catalysed reaction is L-threonyl-[protein] + ATP = O-phospho-L-threonyl-[protein] + ADP + H(+). In terms of biological role, together with SRK2I, key component and activator of the abscisic acid (ABA) signaling pathway that regulates numerous ABA responses, such as seed germination, Pro accumulation, root growth inhibition, dormancy and seedling growth, and, to a lesser extent, stomatal closure. In response to ABA, phosphorylates the ESCRT-I complex component FREE1, which is required for ABA-induced FREE1 nuclear import. The polypeptide is Serine/threonine-protein kinase SRK2D (SRK2D) (Arabidopsis thaliana (Mouse-ear cress)).